A 247-amino-acid chain; its full sequence is 6-phosphogluconolactonase (247 aa).

It belongs to the glucosamine/galactosamine-6-phosphate isomerase family. 6-phosphogluconolactonase subfamily.

It catalyses the reaction 6-phospho-D-glucono-1,5-lactone + H2O = 6-phospho-D-gluconate + H(+). The protein operates within carbohydrate degradation; pentose phosphate pathway; D-ribulose 5-phosphate from D-glucose 6-phosphate (oxidative stage): step 2/3. Functionally, hydrolysis of 6-phosphogluconolactone to 6-phosphogluconate. The protein is 6-phosphogluconolactonase (pgl) of Mycobacterium leprae (strain TN).